A 137-amino-acid polypeptide reads, in one-letter code: Basic phospholipase A2 2 (137 aa).

A signal peptide spans 1–11 (LVAVCVSLLGA). Residues 12 to 19 (ANIPPQPL) constitute a propeptide that is removed on maturation. Disulfide bonds link cysteine 30-cysteine 89, cysteine 44-cysteine 136, cysteine 46-cysteine 62, cysteine 61-cysteine 117, cysteine 68-cysteine 110, cysteine 78-cysteine 103, and cysteine 96-cysteine 108. 2 residues coordinate Ca(2+): tyrosine 45 and glycine 47. Residue tyrosine 48 participates in alpha-D-mannopyranose binding. Residue glycine 49 participates in Ca(2+) binding. Histidine 65 is a catalytic residue. Aspartate 66 lines the Ca(2+) pocket. Position 66 (aspartate 66) interacts with alpha-D-mannopyranose. Aspartate 111 is an active-site residue.

It belongs to the phospholipase A2 family. Group I subfamily. D49 sub-subfamily. As to quaternary structure, homodimer; non-covalently linked. The cofactor is Ca(2+). Post-translationally, homodimerization and interaction of the catalytically important Asp-49 (here Asp-111) with mannose molecules may render this protein inactive. In terms of tissue distribution, expressed by the venom gland.

It localises to the secreted. The catalysed reaction is a 1,2-diacyl-sn-glycero-3-phosphocholine + H2O = a 1-acyl-sn-glycero-3-phosphocholine + a fatty acid + H(+). Snake venom phospholipase A2 (PLA2) that shows anticoagulant and neurotoxic activities. Functionally, PLA2 catalyzes the calcium-dependent hydrolysis of the 2-acyl groups in 3-sn-phosphoglycerides. In Bungarus caeruleus (Indian krait), this protein is Basic phospholipase A2 2.